The sequence spans 198 residues: Segregation and condensation protein B (198 aa).

The interval 168–198 (KLADPATDEPDQNEMDLFFDRFNQSKEQEEE) is disordered.

Belongs to the ScpB family. In terms of assembly, homodimer. Homodimerization may be required to stabilize the binding of ScpA to the Smc head domains. Component of a cohesin-like complex composed of ScpA, ScpB and the Smc homodimer, in which ScpA and ScpB bind to the head domain of Smc. The presence of the three proteins is required for the association of the complex with DNA.

The protein resides in the cytoplasm. In terms of biological role, participates in chromosomal partition during cell division. May act via the formation of a condensin-like complex containing Smc and ScpA that pull DNA away from mid-cell into both cell halves. This Listeria monocytogenes serotype 4b (strain CLIP80459) protein is Segregation and condensation protein B.